A 601-amino-acid chain; its full sequence is Terpenoid synthase 17 (601 aa).

Mg(2+) is bound by residues Asn-354, Asp-358, Asn-497, Thr-501, and Glu-505. The short motif at 354–358 is the DDXXD motif; degenerate element; the sequence is NDTCD.

This sequence belongs to the terpene synthase family. Tpsa subfamily. The cofactor is Mg(2+). It depends on Mn(2+) as a cofactor. In terms of tissue distribution, expressed exclusively in flowers.

The protein localises to the cytoplasm. Its pathway is secondary metabolite biosynthesis; terpenoid biosynthesis. This is Terpenoid synthase 17 (TPS17) from Arabidopsis thaliana (Mouse-ear cress).